The sequence spans 258 residues: Synapse differentiation-inducing gene protein 1 (258 aa).

Residues 1 to 181 (MDGIVEQKSV…NFLMMPPRDH (181 aa)) lie on the Cytoplasmic side of the membrane. Ser137 is subject to Phosphoserine. The chain crosses the membrane as a helical span at residues 182-202 (LGLSVFSMLCCFWPLGIAAFY). Topologically, residues 203 to 228 (LSHETNKAVAKGDFHQASTSSRRALF) are extracellular. Positions 229–249 (LAVLSITIGTGIYVGVAVALI) form an intramembrane region, helical. Over 250-258 (AYLSKNNHL) the chain is Extracellular.

It belongs to the CD225/Dispanin family. Homodimer. Interacts with GRIA1 and GRIA2. As to expression, enriched in the cerebellum and also expressed in the neocortex and modestly in the hippocampus (at protein level). Expressed in hippocampal neurons, both in cell body and neurites, however its presence is enriched at excitatory synapses and also found in postsynaptic cells.

Its subcellular location is the cell membrane. The protein localises to the early endosome membrane. The protein resides in the postsynaptic density membrane. It is found in the synapse. It localises to the cell projection. Its subcellular location is the dendrite. The protein localises to the dendritic spine. Functionally, may regulate AMPA receptor content at nascent synapses, and have a role in postsynaptic development and maturation. This is Synapse differentiation-inducing gene protein 1 (Syndig1) from Rattus norvegicus (Rat).